A 781-amino-acid chain; its full sequence is Catenin beta-1 (781 aa).

Ala2 carries the N-acetylalanine modification. The segment at 2–23 (ATQADLMELDMAMEPDRKAAVS) is interaction with VCL. A Phosphoserine; by GSK3-beta; alternate modification is found at Ser23. An O-linked (GlcNAc) serine; alternate glycan is attached at Ser23. Ser29 carries the phosphoserine; by GSK3-beta modification. A phosphoserine; by GSK3-beta and HIPK2 mark is found at Ser33 and Ser37. Positions 34 to 57 (GIHSGATTTAPSLSGKGNPEEEDV) are disordered. Thr41 carries the phosphothreonine; by GSK3-beta modification. Ser45 carries the phosphoserine modification. The residue at position 49 (Lys49) is an N6-acetyllysine. The residue at position 64 (Tyr64) is a Phosphotyrosine; by PTK6. Residue Tyr142 is modified to Phosphotyrosine; by FYN and PTK6. ARM repeat units lie at residues 151 to 191 (RAIP…IMRS), 193 to 234 (QMVS…IFKS), 235 to 276 (GGIP…VRLA), 277 to 318 (GGLQ…ILAS), 319 to 360 (GGPQ…IVEA), 361 to 389 (GGMQ…RNLS), 400 to 441 (GLLG…VCQV), 442 to 484 (GGIE…AQNA), 489 to 530 (YGLP…LREQ), 531 to 571 (GAIP…EIVE), 594 to 636 (NTIP…AEGA), and 637 to 666 (TAPL…SEDK). Positions 156–178 (LTKLLNDEDQVVVNKAAVMVHQL) are interaction with BCL9. Ser191 is subject to Phosphoserine; by CDK5. Ser246 bears the Phosphoserine; by CDK5 mark. Tyr331 is modified (phosphotyrosine; by PTK6). At Tyr333 the chain carries Phosphotyrosine; by SRC and PTK6. Phosphoserine is present on Ser552. Thr556 is modified ((Microbial infection) Phosphothreonine). Thr556 is modified (phosphothreonine). Cys619 is modified (S-nitrosocysteine). Residue Ser675 is modified to Phosphoserine. A disordered region spans residues 705–781 (EPLGYRQDDP…NQLAWFDTDL (77 aa)). The segment covering 734-745 (MMEHEMGGHHPG) has biased composition (basic and acidic residues). Residues 772–781 (NQLAWFDTDL) form an interaction with SCRIB region.

This sequence belongs to the beta-catenin family. Two separate complex-associated pools are found in the cytoplasm. The majority is present as component of an E-cadherin:catenin adhesion complex composed of at least E-cadherin/CDH1 and beta-catenin/CTNNB1, and possibly alpha-catenin/CTNNA1; the complex is located to adherens junctions. The stable association of CTNNA1 is controversial as CTNNA1 was shown not to bind to F-actin when assembled in the complex. Alternatively, the CTNNA1-containing complex may be linked to F-actin by other proteins such as LIMA1. Another cytoplasmic pool is part of a large complex containing AXIN1, AXIN2, APC, CSNK1A1 and GSK3B that promotes phosphorylation on N-terminal Ser and Thr residues and ubiquitination of CTNNB1 via BTRC and its subsequent degradation by the proteasome. Wnt-dependent activation of DVL antagonizes the action of GSK3B. When GSK3B activity is inhibited the complex dissociates, CTNNB1 is dephosphorylated and is no longer targeted for destruction. The stabilized protein translocates to the nucleus, where it binds TCF/LEF-1 family members, BCL9, BCL9L and possibly also RUVBL1 and CHD8. Binds CTNNBIP and EP300. CTNNB1 forms a ternary complex with LEF1 and EP300 that is disrupted by CTNNBIP1 binding. Interacts with TAX1BP3 (via the PDZ domain); this interaction inhibits the transcriptional activity of CTNNB1. Interacts with AJAP1, BAIAP1, CARM1, CTNNA3, CXADR and PCDH11Y. Binds NHERF1. Interacts with GLIS2 and MUC1. Interacts with SLC30A9. Interacts with XIRP1. Interacts directly with AXIN1; the interaction is regulated by CDK2 phosphorylation of AXIN1. Interacts with SCRIB. Interacts with RAPGEF2. Interacts with PTPRU (via the cytoplasmic juxtamembrane domain). Interacts with EMD. Interacts with TNIK and TCF7L2. Interacts with SESTD1 and TRPC4. Interacts with CAV1. Interacts with TRPV4. The TRPV4 and CTNNB1 complex can interact with CDH1. Interacts with VCL. Interacts with PTPRJ. Interacts with PKT7 and CDK2. Interacts with FAT1 (via the cytoplasmic domain). Interacts with NANOS1 and NDRG2. Interacts with isoform 1 of NEK2. Interacts with both isoform 1 and isoform 2 of CDK5. Interacts with PTK6. Interacts with SOX7; this interaction may lead to proteasomal degradation of active CTNNB1 and thus inhibition of Wnt/beta-catenin-stimulated transcription. Identified in a complex with HINT1 and MITF. Interacts with FHIT. The CTNNB1 and TCF7L2/TCF4 complex interacts with PML (isoform PML-4). Interacts with FERMT2. Identified in a complex with TCF7L2/TCF4 and FERMT2. Interacts with RORA. May interact with P-cadherin/CDH3. Interacts with RNF220. Interacts with CTNND2. Interacts (via the C-terminal region) with CBY1. The complex composed, at least, of APC, CTNNB1 and GSK3B interacts with JPT1; the interaction requires the inactive form of GSK3B (phosphorylated at 'Ser-9'). Interacts with DLG5. Interacts with FAM53B; promoting translocation to the nucleus. Interacts with TMEM170B. Interacts with AHI1. Interacts with GID8. Component of an cadherin:catenin adhesion complex composed of at least of CDH26, beta-catenin/CTNNB1, alpha-catenin/CTNNA1 and p120 catenin/CTNND1. Forms a complex comprising APPL1, RUVBL2, APPL2, HDAC1 and HDAC2. Interacts with IRF2BPL; mediates the ubiquitination and degradation of CTNNB1. Interacts with AMFR. Interacts with LMBR1L. Interacts with SOX30; prevents interaction of CTNNB1 with TCF7L2/TCF4 and leads to inhibition of Wnt signaling. Interacts with SOX9; inhibiting CTNNB1 activity by competing with the binding sites of TCF/LEF within CTNNB1, thereby inhibiting the Wnt signaling. Interacts with SPN/CD43 cytoplasmic tail. Interacts (when phosphorylated at Tyr-333) with isoform M2 of PKM (PKM2); promoting transcription activation. Interacts with PKP2 (via HEAD domain). Interacts with CDH1. Interacts (when unphosphorylated) with FLYWCH1, perhaps preventing interaction of CTNNB1 with TCF4, and thereby regulating transcription activation; phosphorylation of CTNNB1 may inhibit the interaction. Interacts (via the central armadillo domains) with probable transcriptional regulator ADNP (via N-terminal region); interaction is direct and stabilizes CTNNB1 by modulating its phosphorylation by glycogen synthase kinase-3 beta GSK3B. Interacts with NR5A2. Interacts with DSG2; the interaction promotes localization of CTNNB1 at cell junctions thus reducing its nuclear localization and subsequent transcription of CTNNB1/TCF-target genes. In terms of assembly, (Microbial infection) Interacts with herpes virus 8 protein vPK; this interaction inhibits the Wnt signaling pathway. Post-translationally, phosphorylation at Ser-552 by AMPK promotes stabilization of the protein, enhancing TCF/LEF-mediated transcription. Phosphorylation by GSK3B requires prior phosphorylation of Ser-45 by another kinase. Phosphorylation proceeds then from Thr-41 to Ser-37 and Ser-33. Phosphorylated by NEK2. EGF stimulates tyrosine phosphorylation. Phosphorylated on Ser-33 and Ser-37 by HIPK2 and GSK3B, this phosphorylation triggers proteasomal degradation. Phosphorylation on Ser-191 and Ser-246 by CDK5. Phosphorylation by CDK2 regulates insulin internalization. Phosphorylation by PTK6 at Tyr-64, Tyr-142, Tyr-331 and/or Tyr-333 with the predominant site at Tyr-64 is not essential for inhibition of transcriptional activity. Phosphorylation by SRC at Tyr-333 promotes interaction with isoform M2 of PKM (PKM2); promoting transcription activation. In terms of processing, ubiquitinated by the SCF(BTRC) E3 ligase complex when phosphorylated by GSK3B, leading to its degradation. Ubiquitinated by a E3 ubiquitin ligase complex containing UBE2D1, SIAH1, CACYBP/SIP, SKP1, APC and TBL1X, leading to its subsequent proteasomal degradation. Ubiquitinated and degraded following interaction with SOX9. Ubiquitinated via 'Lys-11'- and 'Lys-29'-linked ubiquitin chains by UBR5, leading to its stabilization. S-nitrosylation at Cys-619 within adherens junctions promotes VEGF-induced, NO-dependent endothelial cell permeability by disrupting interaction with E-cadherin, thus mediating disassembly adherens junctions. Post-translationally, O-glycosylation at Ser-23 decreases nuclear localization and transcriptional activity, and increases localization to the plasma membrane and interaction with E-cadherin CDH1. In terms of processing, deacetylated at Lys-49 by SIRT1. Phosphorylated at Thr-556 by herpes virus 1/HHV-1 leading to CTNNB1 inhibition. As to expression, expressed in several hair follicle cell types: basal and peripheral matrix cells, and cells of the outer and inner root sheaths. Expressed in colon. Present in cortical neurons (at protein level). Expressed in breast cancer tissues (at protein level).

Its subcellular location is the cytoplasm. The protein resides in the nucleus. The protein localises to the cytoskeleton. It is found in the cell junction. It localises to the adherens junction. Its subcellular location is the cell membrane. The protein resides in the microtubule organizing center. The protein localises to the centrosome. It is found in the spindle pole. It localises to the synapse. Its subcellular location is the cilium basal body. Functionally, key downstream component of the canonical Wnt signaling pathway. In the absence of Wnt, forms a complex with AXIN1, AXIN2, APC, CSNK1A1 and GSK3B that promotes phosphorylation on N-terminal Ser and Thr residues and ubiquitination of CTNNB1 via BTRC and its subsequent degradation by the proteasome. In the presence of Wnt ligand, CTNNB1 is not ubiquitinated and accumulates in the nucleus, where it acts as a coactivator for transcription factors of the TCF/LEF family, leading to activate Wnt responsive genes. Also acts as a coactivator for other transcription factors, such as NR5A2. Promotes epithelial to mesenchymal transition/mesenchymal to epithelial transition (EMT/MET) via driving transcription of CTNNB1/TCF-target genes. Involved in the regulation of cell adhesion, as component of an E-cadherin:catenin adhesion complex. Acts as a negative regulator of centrosome cohesion. Involved in the CDK2/PTPN6/CTNNB1/CEACAM1 pathway of insulin internalization. Blocks anoikis of malignant kidney and intestinal epithelial cells and promotes their anchorage-independent growth by down-regulating DAPK2. Disrupts PML function and PML-NB formation by inhibiting RANBP2-mediated sumoylation of PML. Promotes neurogenesis by maintaining sympathetic neuroblasts within the cell cycle. Involved in chondrocyte differentiation via interaction with SOX9: SOX9-binding competes with the binding sites of TCF/LEF within CTNNB1, thereby inhibiting the Wnt signaling. Acts as a positive regulator of odontoblast differentiation during mesenchymal tooth germ formation, via promoting the transcription of differentiation factors such as LEF1, BMP2 and BMP4. Activity is repressed in a MSX1-mediated manner at the bell stage of mesenchymal tooth germ formation which prevents premature differentiation of odontoblasts. In Homo sapiens (Human), this protein is Catenin beta-1.